The sequence spans 235 residues: 7-cyano-7-deazaguanine synthase (235 aa).

8–18 (FSGGQDSTTCL) is a binding site for ATP. Residues Cys187, Cys196, Cys199, and Cys202 each coordinate Zn(2+).

Belongs to the QueC family. Zn(2+) is required as a cofactor.

The enzyme catalyses 7-carboxy-7-deazaguanine + NH4(+) + ATP = 7-cyano-7-deazaguanine + ADP + phosphate + H2O + H(+). It participates in purine metabolism; 7-cyano-7-deazaguanine biosynthesis. Catalyzes the ATP-dependent conversion of 7-carboxy-7-deazaguanine (CDG) to 7-cyano-7-deazaguanine (preQ(0)). In Aeromonas hydrophila subsp. hydrophila (strain ATCC 7966 / DSM 30187 / BCRC 13018 / CCUG 14551 / JCM 1027 / KCTC 2358 / NCIMB 9240 / NCTC 8049), this protein is 7-cyano-7-deazaguanine synthase.